We begin with the raw amino-acid sequence, 245 residues long: 1-(5-phosphoribosyl)-5-[(5-phosphoribosylamino)methylideneamino] imidazole-4-carboxamide isomerase (245 aa).

Asp8 functions as the Proton acceptor in the catalytic mechanism. The active-site Proton donor is the Asp131.

Belongs to the HisA/HisF family.

It is found in the cytoplasm. It catalyses the reaction 1-(5-phospho-beta-D-ribosyl)-5-[(5-phospho-beta-D-ribosylamino)methylideneamino]imidazole-4-carboxamide = 5-[(5-phospho-1-deoxy-D-ribulos-1-ylimino)methylamino]-1-(5-phospho-beta-D-ribosyl)imidazole-4-carboxamide. Its pathway is amino-acid biosynthesis; L-histidine biosynthesis; L-histidine from 5-phospho-alpha-D-ribose 1-diphosphate: step 4/9. This Neisseria meningitidis serogroup C / serotype 2a (strain ATCC 700532 / DSM 15464 / FAM18) protein is 1-(5-phosphoribosyl)-5-[(5-phosphoribosylamino)methylideneamino] imidazole-4-carboxamide isomerase.